Consider the following 118-residue polypeptide: Ribonuclease P protein component (118 aa).

It belongs to the RnpA family. As to quaternary structure, consists of a catalytic RNA component (M1 or rnpB) and a protein subunit.

The enzyme catalyses Endonucleolytic cleavage of RNA, removing 5'-extranucleotides from tRNA precursor.. RNaseP catalyzes the removal of the 5'-leader sequence from pre-tRNA to produce the mature 5'-terminus. It can also cleave other RNA substrates such as 4.5S RNA. The protein component plays an auxiliary but essential role in vivo by binding to the 5'-leader sequence and broadening the substrate specificity of the ribozyme. The polypeptide is Ribonuclease P protein component (Mycoplasma pneumoniae (strain ATCC 29342 / M129 / Subtype 1) (Mycoplasmoides pneumoniae)).